A 359-amino-acid polypeptide reads, in one-letter code: Peptide chain release factor 1 (359 aa).

Gln236 is subject to N5-methylglutamine.

It belongs to the prokaryotic/mitochondrial release factor family. In terms of processing, methylated by PrmC. Methylation increases the termination efficiency of RF1.

Its subcellular location is the cytoplasm. In terms of biological role, peptide chain release factor 1 directs the termination of translation in response to the peptide chain termination codons UAG and UAA. The chain is Peptide chain release factor 1 from Streptococcus pyogenes serotype M6 (strain ATCC BAA-946 / MGAS10394).